A 362-amino-acid chain; its full sequence is S-adenosylmethionine:tRNA ribosyltransferase-isomerase (362 aa).

The protein belongs to the QueA family. In terms of assembly, monomer.

The protein localises to the cytoplasm. It carries out the reaction 7-aminomethyl-7-carbaguanosine(34) in tRNA + S-adenosyl-L-methionine = epoxyqueuosine(34) in tRNA + adenine + L-methionine + 2 H(+). It functions in the pathway tRNA modification; tRNA-queuosine biosynthesis. Its function is as follows. Transfers and isomerizes the ribose moiety from AdoMet to the 7-aminomethyl group of 7-deazaguanine (preQ1-tRNA) to give epoxyqueuosine (oQ-tRNA). The polypeptide is S-adenosylmethionine:tRNA ribosyltransferase-isomerase (Deinococcus radiodurans (strain ATCC 13939 / DSM 20539 / JCM 16871 / CCUG 27074 / LMG 4051 / NBRC 15346 / NCIMB 9279 / VKM B-1422 / R1)).